The following is a 389-amino-acid chain: Alkanesulfonate monooxygenase (389 aa).

It belongs to the SsuD family.

It catalyses the reaction an alkanesulfonate + FMNH2 + O2 = an aldehyde + FMN + sulfite + H2O + 2 H(+). In terms of biological role, catalyzes the desulfonation of aliphatic sulfonates. The polypeptide is Alkanesulfonate monooxygenase (Rhizobium etli (strain CIAT 652)).